The primary structure comprises 65 residues: Large ribosomal subunit protein bL35c (65 aa).

The interval 18 to 50 (SSGKILRHKASKSHLLQKKSSKHRRHLSSTCQV) is disordered. Basic residues predominate over residues 22–44 (ILRHKASKSHLLQKKSSKHRRHL).

This sequence belongs to the bacterial ribosomal protein bL35 family.

Its subcellular location is the plastid. It is found in the chloroplast. The protein is Large ribosomal subunit protein bL35c of Porphyra purpurea (Red seaweed).